The following is an 842-amino-acid chain: GPI ethanolamine phosphate transferase 2 (842 aa).

The N-linked (GlcNAc...) asparagine glycan is linked to asparagine 186. A helical membrane pass occupies residues 409-429 (YNYPLLFIGCFLSIVITGTIY). A glycan (N-linked (GlcNAc...) asparagine) is linked at asparagine 441. 2 helical membrane-spanning segments follow: residues 442–462 (TSIL…SSFI) and 468–488 (FWWW…NFSS). N-linked (GlcNAc...) asparagine glycosylation occurs at asparagine 506. A helical transmembrane segment spans residues 524–544 (GNIDALWWLNLITVTVVGLNL). Residue asparagine 551 is glycosylated (N-linked (GlcNAc...) asparagine). The chain crosses the membrane as a helical span at residues 554–574 (VSLLGFSDLLSMGLLSMITFL). An N-linked (GlcNAc...) asparagine glycan is attached at asparagine 578. 3 helical membrane passes run 615–635 (IHTA…AVLV), 698–718 (YLLA…QSGG), and 740–760 (IYVV…YWSF). Asparagine 771 carries an N-linked (GlcNAc...) asparagine glycan. The next 2 helical transmembrane spans lie at 783–803 (YPFI…CIIL) and 821–841 (MVWT…LLLL).

Belongs to the PIGG/PIGN/PIGO family. PIGG subfamily.

The protein resides in the endoplasmic reticulum membrane. It functions in the pathway glycolipid biosynthesis; glycosylphosphatidylinositol-anchor biosynthesis. Its function is as follows. Ethanolamine phosphate transferase involved in glycosylphosphatidylinositol-anchor biosynthesis. Transfers ethanolamine phosphate to the GPI second mannose. The protein is GPI ethanolamine phosphate transferase 2 (LAS21) of Candida glabrata (strain ATCC 2001 / BCRC 20586 / JCM 3761 / NBRC 0622 / NRRL Y-65 / CBS 138) (Yeast).